Consider the following 260-residue polypeptide: Ribosomal RNA small subunit methyltransferase G (260 aa).

S-adenosyl-L-methionine-binding residues include glycine 111, phenylalanine 116, and arginine 181.

The protein belongs to the methyltransferase superfamily. RNA methyltransferase RsmG family.

The protein localises to the cytoplasm. The catalysed reaction is guanosine(527) in 16S rRNA + S-adenosyl-L-methionine = N(7)-methylguanosine(527) in 16S rRNA + S-adenosyl-L-homocysteine. Functionally, specifically methylates the N7 position of guanine in position 527 of 16S rRNA. The polypeptide is Ribosomal RNA small subunit methyltransferase G (Nitrobacter hamburgensis (strain DSM 10229 / NCIMB 13809 / X14)).